The chain runs to 192 residues: Interferon (192 aa).

Residues 1-30 (MAVPASPQHPRGYGILLLTLLMKALAAAAA) form the signal peptide. 3 cysteine pairs are disulfide-bonded: C31–C128, C60–C154, and C67–C167. N-linked (GlcNAc...) asparagine glycosylation is found at N70 and N77.

It belongs to the alpha/beta interferon family.

Its subcellular location is the secreted. In terms of biological role, has antiviral activities. This is Interferon from Meleagris gallopavo (Wild turkey).